Reading from the N-terminus, the 869-residue chain is DNA mismatch repair protein MutS (869 aa).

624–631 is an ATP binding site; the sequence is GPNMGGKS.

This sequence belongs to the DNA mismatch repair MutS family.

Its function is as follows. This protein is involved in the repair of mismatches in DNA. It is possible that it carries out the mismatch recognition step. This protein has a weak ATPase activity. The protein is DNA mismatch repair protein MutS of Solibacter usitatus (strain Ellin6076).